Here is an 820-residue protein sequence, read N- to C-terminus: DNA replication helicase (820 aa).

90–97 provides a ligand contact to ATP; sequence GTAGAGKT.

It belongs to the herpesviridae helicase family. In terms of assembly, associates with the primase and the primase-associated factor to form the helicase-primase complex.

Its subcellular location is the host nucleus. In terms of biological role, component of the helicase/primase complex. Unwinds the DNA at the replication forks and generates single-stranded DNA for both leading and lagging strand synthesis. The primase synthesizes short RNA primers on the lagging strand that the polymerase elongates using dNTPs. Possesses helicase-like motifs and therefore may act as the helicase subunit of the complex. The polypeptide is DNA replication helicase (Human herpesvirus 7 (strain JI) (HHV-7)).